The following is a 447-amino-acid chain: Tubulin alpha-1 chain (447 aa).

8 residues coordinate GTP: Gln-11, Glu-72, Ser-141, Gly-145, Thr-146, Thr-180, Asn-207, and Asn-229. Glu-72 contributes to the Mg(2+) binding site. The active site involves Glu-255.

Belongs to the tubulin family. As to quaternary structure, dimer of alpha and beta chains. A typical microtubule is a hollow water-filled tube with an outer diameter of 25 nm and an inner diameter of 15 nM. Alpha-beta heterodimers associate head-to-tail to form protofilaments running lengthwise along the microtubule wall with the beta-tubulin subunit facing the microtubule plus end conferring a structural polarity. Microtubules usually have 13 protofilaments but different protofilament numbers can be found in some organisms and specialized cells. The cofactor is Mg(2+).

It is found in the cytoplasm. The protein localises to the cytoskeleton. The catalysed reaction is GTP + H2O = GDP + phosphate + H(+). Its function is as follows. Tubulin is the major constituent of microtubules, a cylinder consisting of laterally associated linear protofilaments composed of alpha- and beta-tubulin heterodimers. Microtubules grow by the addition of GTP-tubulin dimers to the microtubule end, where a stabilizing cap forms. Below the cap, tubulin dimers are in GDP-bound state, owing to GTPase activity of alpha-tubulin. The sequence is that of Tubulin alpha-1 chain (TUB1) from Saccharomyces cerevisiae (strain ATCC 204508 / S288c) (Baker's yeast).